We begin with the raw amino-acid sequence, 105 residues long: Putative membrane protein insertion efficiency factor (105 aa).

This sequence belongs to the UPF0161 family.

The protein resides in the cell inner membrane. Could be involved in insertion of integral membrane proteins into the membrane. This chain is Putative membrane protein insertion efficiency factor, found in Nitratidesulfovibrio vulgaris (strain DSM 19637 / Miyazaki F) (Desulfovibrio vulgaris).